A 395-amino-acid polypeptide reads, in one-letter code: Elongation factor Tu (395 aa).

Positions 10–204 constitute a tr-type G domain; that stretch reads KPHVNVGTIG…AVDNWVPLPE (195 aa). Residues 19-26 form a G1 region; the sequence is GHVDHGKT. 19–26 serves as a coordination point for GTP; the sequence is GHVDHGKT. Thr-26 serves as a coordination point for Mg(2+). Residues 60–64 are G2; it reads GITIN. The interval 81–84 is G3; sequence DCPG. Residues 81 to 85 and 136 to 139 each bind GTP; these read DCPGH and NKCD. The tract at residues 136–139 is G4; sequence NKCD. Residues 174–176 are G5; sequence SAL.

Belongs to the TRAFAC class translation factor GTPase superfamily. Classic translation factor GTPase family. EF-Tu/EF-1A subfamily. In terms of assembly, monomer.

It is found in the cytoplasm. The catalysed reaction is GTP + H2O = GDP + phosphate + H(+). In terms of biological role, GTP hydrolase that promotes the GTP-dependent binding of aminoacyl-tRNA to the A-site of ribosomes during protein biosynthesis. This is Elongation factor Tu from Porphyromonas gingivalis (strain ATCC 33277 / DSM 20709 / CIP 103683 / JCM 12257 / NCTC 11834 / 2561).